The sequence spans 36 residues: GLIDVRCYDSRQCWIACKKVTGSTQGKCQNKQCRCY.

Cystine bridges form between Cys7-Cys28, Cys13-Cys33, and Cys17-Cys35. Residues 26–33 form an interaction with Ca(2+)-activated K(+) channels region; that stretch reads GKCQNKQC.

Belongs to the short scorpion toxin superfamily. Potassium channel inhibitor family. Alpha-KTx 16 subfamily. As to expression, expressed by the venom gland.

The protein localises to the secreted. Its function is as follows. Augments responses to direct muscle stimulation probably by blocking calcium-activated potassium channels. This chain is Potassium channel toxin alpha-KTx 16.5, found in Leiurus hebraeus (Hebrew deathstalker scorpion).